A 390-amino-acid chain; its full sequence is Ribonucleoside-diphosphate reductase subunit M2 (390 aa).

A Phosphoserine modification is found at Ser20. Thr33 bears the Phosphothreonine mark. The Cy motif lies at 49 to 51 (RRI). Fe cation is bound by residues Asp139, Glu170, and His173. Tyr177 is a catalytic residue. Residues Glu233, Glu267, and His270 each contribute to the Fe cation site.

Belongs to the ribonucleoside diphosphate reductase small chain family. In terms of assembly, heterodimer of a large and a small subunit. Interacts (via Cy motif and when phosphorylated at Thr-33) with CCNF; the interaction occurs exclusively in G2 and early M. Fe cation is required as a cofactor. Post-translationally, phosphorylation on Ser-20 relieves the inhibitory effect on Wnt signaling. Phosphorylated on Thr-33 by CDK1 and CDK2; predominantly in G2 and M phase. In terms of processing, ubiquitinated by the SCF(CCNF) E3 ubiquitin-protein ligase complex; leading to its degradation by the proteasome.

The protein resides in the cytoplasm. The protein localises to the nucleus. The catalysed reaction is a 2'-deoxyribonucleoside 5'-diphosphate + [thioredoxin]-disulfide + H2O = a ribonucleoside 5'-diphosphate + [thioredoxin]-dithiol. Functionally, provides the precursors necessary for DNA synthesis. Catalyzes the biosynthesis of deoxyribonucleotides from the corresponding ribonucleotides. Inhibits Wnt signaling. This chain is Ribonucleoside-diphosphate reductase subunit M2 (Rrm2), found in Rattus norvegicus (Rat).